A 473-amino-acid polypeptide reads, in one-letter code: Chromosomal replication initiator protein DnaA (473 aa).

The interval 1–90 (MSSSLWLQCL…KRVTAPKSET (90 aa)) is domain I, interacts with DnaA modulators. The segment at 91-136 (IAPARTRTAADVAAESSAPAQLQARKPVHNIWRDEEPVAVDLNHRS) is domain II. The segment at 137–353 (NVNPKHKFNN…GALNRVIANA (217 aa)) is domain III, AAA+ region. Positions 181, 183, 184, and 185 each coordinate ATP. The interval 354–473 (NFTGRPITID…YSNLIRTLSS (120 aa)) is domain IV, binds dsDNA.

Belongs to the DnaA family. Oligomerizes as a right-handed, spiral filament on DNA at oriC.

The protein resides in the cytoplasm. In terms of biological role, plays an essential role in the initiation and regulation of chromosomal replication. ATP-DnaA binds to the origin of replication (oriC) to initiate formation of the DNA replication initiation complex once per cell cycle. Binds the DnaA box (a 9 base pair repeat at the origin) and separates the double-stranded (ds)DNA. Forms a right-handed helical filament on oriC DNA; dsDNA binds to the exterior of the filament while single-stranded (ss)DNA is stabiized in the filament's interior. The ATP-DnaA-oriC complex binds and stabilizes one strand of the AT-rich DNA unwinding element (DUE), permitting loading of DNA polymerase. After initiation quickly degrades to an ADP-DnaA complex that is not apt for DNA replication. Binds acidic phospholipids. This is Chromosomal replication initiator protein DnaA from Vibrio atlanticus (strain LGP32) (Vibrio splendidus (strain Mel32)).